Consider the following 426-residue polypeptide: Gamma-glutamyl phosphate reductase (426 aa).

It belongs to the gamma-glutamyl phosphate reductase family.

It is found in the cytoplasm. It carries out the reaction L-glutamate 5-semialdehyde + phosphate + NADP(+) = L-glutamyl 5-phosphate + NADPH + H(+). Its pathway is amino-acid biosynthesis; L-proline biosynthesis; L-glutamate 5-semialdehyde from L-glutamate: step 2/2. In terms of biological role, catalyzes the NADPH-dependent reduction of L-glutamate 5-phosphate into L-glutamate 5-semialdehyde and phosphate. The product spontaneously undergoes cyclization to form 1-pyrroline-5-carboxylate. This Sorangium cellulosum (strain So ce56) (Polyangium cellulosum (strain So ce56)) protein is Gamma-glutamyl phosphate reductase.